Here is a 393-residue protein sequence, read N- to C-terminus: Lipoyl synthase, mitochondrial (393 aa).

[4Fe-4S] cluster contacts are provided by Cys-111, Cys-116, Cys-122, Cys-142, Cys-146, Cys-149, and Ser-357. The 220-residue stretch at 127-346 folds into the Radical SAM core domain; sequence EHGTQTATIM…ETRGNELGFL (220 aa).

Belongs to the radical SAM superfamily. Lipoyl synthase family. It depends on [4Fe-4S] cluster as a cofactor.

It localises to the mitochondrion. It carries out the reaction [[Fe-S] cluster scaffold protein carrying a second [4Fe-4S](2+) cluster] + N(6)-octanoyl-L-lysyl-[protein] + 2 oxidized [2Fe-2S]-[ferredoxin] + 2 S-adenosyl-L-methionine + 4 H(+) = [[Fe-S] cluster scaffold protein] + N(6)-[(R)-dihydrolipoyl]-L-lysyl-[protein] + 4 Fe(3+) + 2 hydrogen sulfide + 2 5'-deoxyadenosine + 2 L-methionine + 2 reduced [2Fe-2S]-[ferredoxin]. The protein operates within protein modification; protein lipoylation via endogenous pathway; protein N(6)-(lipoyl)lysine from octanoyl-[acyl-carrier-protein]: step 2/2. Catalyzes the radical-mediated insertion of two sulfur atoms into the C-6 and C-8 positions of the octanoyl moiety bound to the lipoyl domains of lipoate-dependent enzymes, thereby converting the octanoylated domains into lipoylated derivatives. The polypeptide is Lipoyl synthase, mitochondrial (Aedes aegypti (Yellowfever mosquito)).